The chain runs to 78 residues: Sec-independent protein translocase protein TatA (78 aa).

The chain crosses the membrane as a helical span at residues 1 to 21 (MGSLSIWHWIVVIGVVLLLFG). Basic and acidic residues predominate over residues 42–60 (GLQDDEKTAEKPEPVKSID). The segment at 42 to 78 (GLQDDEKTAEKPEPVKSIDHTAPPAAAPRTDVGSKVV) is disordered.

Belongs to the TatA/E family. As to quaternary structure, the Tat system comprises two distinct complexes: a TatABC complex, containing multiple copies of TatA, TatB and TatC subunits, and a separate TatA complex, containing only TatA subunits. Substrates initially bind to the TatABC complex, which probably triggers association of the separate TatA complex to form the active translocon.

The protein localises to the cell inner membrane. Its function is as follows. Part of the twin-arginine translocation (Tat) system that transports large folded proteins containing a characteristic twin-arginine motif in their signal peptide across membranes. TatA could form the protein-conducting channel of the Tat system. This is Sec-independent protein translocase protein TatA from Rhodopseudomonas palustris (strain BisB18).